The following is a 131-amino-acid chain: Leptin receptor gene-related protein (131 aa).

Transmembrane regions (helical) follow at residues 7–27 (LVGL…GCAL), 32–52 (VYWP…HFIA), 69–89 (LAYF…IILA), and 100–120 (GLVL…FLVF).

It belongs to the OB-RGRP/VPS55 family.

The protein localises to the golgi apparatus membrane. Its subcellular location is the endosome membrane. Involved in protein trafficking. May be involved in the down-regulation of membrane protein levels. This chain is Leptin receptor gene-related protein (LEPROT), found in Gallus gallus (Chicken).